The primary structure comprises 772 residues: Ion-translocating oxidoreductase complex subunit C (772 aa).

4Fe-4S ferredoxin-type domains lie at 369–397 (GEPQ…QQLY) and 407–436 (KATT…VQYF). Positions 377, 380, 383, 387, 416, 419, 422, and 426 each coordinate [4Fe-4S] cluster. Disordered stretches follow at residues 602–684 (KLEQ…DPRK), 696–717 (ARKL…PRKA), and 727–746 (KARK…QVDP). Residues 605–615 (QQQANAEPEQQ) show a composition bias toward low complexity.

The protein belongs to the 4Fe4S bacterial-type ferredoxin family. RnfC subfamily. The complex is composed of six subunits: RsxA, RsxB, RsxC, RsxD, RsxE and RsxG. It depends on [4Fe-4S] cluster as a cofactor.

It is found in the cell inner membrane. Functionally, part of a membrane-bound complex that couples electron transfer with translocation of ions across the membrane. Required to maintain the reduced state of SoxR. The protein is Ion-translocating oxidoreductase complex subunit C of Escherichia coli O157:H7 (strain EC4115 / EHEC).